The primary structure comprises 768 residues: Photosystem I P700 chlorophyll a apoprotein A1 (768 aa).

The next 8 membrane-spanning stretches (helical) occupy residues 76–99 (VFSA…FHGA), 162–185 (LMAL…YHYH), 201–225 (LNHH…HIGA), 310–328 (ISHH…GHLY), 369–392 (WHAQ…HHMY), 408–434 (LGLF…IAMI), 456–478 (ALIS…LYIH), and 559–577 (FMIH…LILL). Positions 601 and 610 each coordinate [4Fe-4S] cluster. Transmembrane regions (helical) follow at residues 617-638 (HVFL…HFSW) and 682-704 (ISMY…MFLF). His-693 contacts divinylchlorophyll a'. Positions 701 and 709 each coordinate divinyl chlorophyll a. Trp-710 provides a ligand contact to phylloquinone. The chain crosses the membrane as a helical span at residues 742–762 (AVGAAHFLLGGIATTWAFFHA).

Belongs to the PsaA/PsaB family. In terms of assembly, the PsaA/B heterodimer binds the P700 divinyl chlorophyll special pair and subsequent electron acceptors. PSI consists of a core antenna complex that captures photons, and an electron transfer chain that converts photonic excitation into a charge separation. The cyanobacterial PSI reaction center is composed of one copy each of PsaA,B,C,D,E,F,I,J,K,L,M and X, and forms trimeric complexes. The cofactor is PSI electron transfer chain: 5 divinyl chlorophyll a, 1 divinyl chlorophyll a', 2 phylloquinones and 3 4Fe-4S clusters. PSI core antenna: 90 divinyl chlorophyll a, 22 carotenoids, 3 phospholipids and 1 galactolipid. P700 is a divinyl chlorophyll a/divinyl chlorophyll a' dimer, A0 is one or more divinyl chlorophyll a, A1 is one or both phylloquinones and FX is a shared 4Fe-4S iron-sulfur center..

Its subcellular location is the cellular thylakoid membrane. The enzyme catalyses reduced [plastocyanin] + hnu + oxidized [2Fe-2S]-[ferredoxin] = oxidized [plastocyanin] + reduced [2Fe-2S]-[ferredoxin]. Its function is as follows. PsaA and PsaB bind P700, the primary electron donor of photosystem I (PSI), as well as the electron acceptors A0, A1 and FX. PSI is a plastocyanin/cytochrome c6-ferredoxin oxidoreductase, converting photonic excitation into a charge separation, which transfers an electron from the donor P700 chlorophyll pair to the spectroscopically characterized acceptors A0, A1, FX, FA and FB in turn. Oxidized P700 is reduced on the lumenal side of the thylakoid membrane by plastocyanin or cytochrome c6. This Prochlorococcus marinus (strain NATL2A) protein is Photosystem I P700 chlorophyll a apoprotein A1.